The following is a 223-amino-acid chain: Putative synaptogyrin-2 like protein (223 aa).

Residue M1 is modified to N-acetylmethionine. S3 carries the post-translational modification Phosphoserine. The MARVEL domain occupies 20-170 (FLTQPQVVAR…LASLTYQRYK (151 aa)). A run of 4 helical transmembrane segments spans residues 26-46 (VVARALCLVFALIVFSCIYGE), 71-91 (GSAIGVLAFLASAFLVVDAYF), 104-124 (VIGDLLFSALWTFLWFVGFCF), and 146-166 (AAITFSFFSIFSWGVLASLTY). Residues 197 to 223 (ASVDNYQQPPFTQNAETTEGYQPPPVY) form a disordered region. Polar residues predominate over residues 200-216 (DNYQQPPFTQNAETTEG).

The protein belongs to the synaptogyrin family.

The protein resides in the membrane. The chain is Putative synaptogyrin-2 like protein from Homo sapiens (Human).